The sequence spans 188 residues: Elongation factor P (188 aa).

Belongs to the elongation factor P family.

It is found in the cytoplasm. Its pathway is protein biosynthesis; polypeptide chain elongation. Its function is as follows. Involved in peptide bond synthesis. Stimulates efficient translation and peptide-bond synthesis on native or reconstituted 70S ribosomes in vitro. Probably functions indirectly by altering the affinity of the ribosome for aminoacyl-tRNA, thus increasing their reactivity as acceptors for peptidyl transferase. This chain is Elongation factor P, found in Pseudomonas aeruginosa (strain LESB58).